The primary structure comprises 55 residues: Large ribosomal subunit protein bL33 (55 aa).

It belongs to the bacterial ribosomal protein bL33 family.

In Sinorhizobium fredii (strain NBRC 101917 / NGR234), this protein is Large ribosomal subunit protein bL33.